Here is a 401-residue protein sequence, read N- to C-terminus: Homocitrate synthase (401 aa).

In terms of domain architecture, Pyruvate carboxyltransferase spans 22–271 (VRFCDTTLRD…KLPIDLDTTS (250 aa)). Positions 367–401 (TRHKRGLDSRDLPGTSRAGRDAGPRAGTPTREEPV) are disordered.

The protein belongs to the alpha-IPM synthase/homocitrate synthase family.

It carries out the reaction acetyl-CoA + 2-oxoglutarate + H2O = (2R)-homocitrate + CoA + H(+). In terms of biological role, this protein is a Fe-Mo-cofactor biosynthetic component. The sequence is that of Homocitrate synthase (nifV) from Frankia sp. (strain FaC1).